The following is a 270-amino-acid chain: uncharacterized protein (270 aa).

Its function is as follows. Possibly involved in pGI2 replication mechanism. This is an uncharacterized protein from Bacillus thuringiensis.